Consider the following 492-residue polypeptide: Trk system potassium uptake protein TrkI (492 aa).

10 helical membrane passes run 20 to 40, 47 to 67, 81 to 101, 143 to 163, 196 to 216, 246 to 266, 282 to 302, 334 to 354, 403 to 423, and 465 to 485; these read VLAV…LVLI, ALAF…SWIV, FVLT…PLVL, IMQW…LPFL, IYCG…MSPL, QLLW…VLYI, VQGL…WRVS, AWGA…GCSG, VVAF…GLSL, and WLLC…LVLL.

Belongs to the TrkH potassium transport family.

It localises to the cell inner membrane. Functionally, medium-affinity potassium transport system. Probably interacts with Trk system potassium uptake protein TrkA. Main K(+) transporter in osmotically adapted cells. The polypeptide is Trk system potassium uptake protein TrkI (trkI) (Halomonas elongata (strain ATCC 33173 / DSM 2581 / NBRC 15536 / NCIMB 2198 / 1H9)).